A 1451-amino-acid chain; its full sequence is DNA polymerase III PolC-type (1451 aa).

Residues 416–575 (FVIFDIETTG…YDTEALKKVF (160 aa)) enclose the Exonuclease domain.

The protein belongs to the DNA polymerase type-C family. PolC subfamily.

It localises to the cytoplasm. It catalyses the reaction DNA(n) + a 2'-deoxyribonucleoside 5'-triphosphate = DNA(n+1) + diphosphate. Its function is as follows. Required for replicative DNA synthesis. This DNA polymerase also exhibits 3' to 5' exonuclease activity. The sequence is that of DNA polymerase III PolC-type from Mycoplasma genitalium (strain ATCC 33530 / DSM 19775 / NCTC 10195 / G37) (Mycoplasmoides genitalium).